The chain runs to 596 residues: Putative terpenoid synthase 5 (596 aa).

Residues Asp349, Asp353, Asn481, and Asp489 each contribute to the Mg(2+) site. The DDXXD motif motif lies at Asp349–Asp353.

This sequence belongs to the terpene synthase family. Tpsa subfamily. It depends on Mg(2+) as a cofactor. Requires Mn(2+) as cofactor.

The protein localises to the cytoplasm. It participates in secondary metabolite biosynthesis; terpenoid biosynthesis. The polypeptide is Putative terpenoid synthase 5 (TPS05) (Arabidopsis thaliana (Mouse-ear cress)).